The chain runs to 268 residues: Tryptophan synthase alpha chain (268 aa).

Catalysis depends on proton acceptor residues glutamate 49 and aspartate 60.

This sequence belongs to the TrpA family. In terms of assembly, tetramer of two alpha and two beta chains.

It catalyses the reaction (1S,2R)-1-C-(indol-3-yl)glycerol 3-phosphate + L-serine = D-glyceraldehyde 3-phosphate + L-tryptophan + H2O. It functions in the pathway amino-acid biosynthesis; L-tryptophan biosynthesis; L-tryptophan from chorismate: step 5/5. Functionally, the alpha subunit is responsible for the aldol cleavage of indoleglycerol phosphate to indole and glyceraldehyde 3-phosphate. In Haemophilus influenzae (strain 86-028NP), this protein is Tryptophan synthase alpha chain.